A 386-amino-acid polypeptide reads, in one-letter code: Diels-Alderase phm7 (386 aa).

A beta-sandwich motif region spans residues 1–223 (MSEPTSSSSL…MVRGWSARPW (223 aa)). Residues E51, N84, and K356 each contribute to the substrate site. The beta-barrel motif stretch occupies residues 223-386 (WPTFMNDAYY…FGGQLQIPVP (164 aa)).

It belongs to the Diels-Alderase family.

It participates in secondary metabolite biosynthesis. 3-aminomethyl-p-menthane which is similar to the phomasetin substructure, dose-dependently inhibits phm7 activity in vitro and production of phomasetin in the fungus. Its function is as follows. Diels-Alderase; part of the gene cluster that mediates the biosynthesis of the trans-fused decalin-containing tetramic acid phomasetin, the stereochemical opposite of the HIV-1 integrase inhibitor equisetin. The PKS module of phm1 together with the enoylreductase phm4 catalyze the formation of the polyketide unit which is then conjugated to L-serine by the condensation domain of the phm1 NRPS module. Activity of the Dieckmann cyclase domain (RED) of phm1 results in release of the Dieckmann product intermediate. The Diels-Alderase phm7 then uses the Dieckmann product of phm1 as substrate and catalyzes the Diels-Alder cycloaddition to form the decalin ring of N-desmethylphomasetin. N-desmethylphomasetin is further methylated to phomasetin by the methyltransferase phm5. The protein is Diels-Alderase phm7 of Pyrenochaetopsis sp.